A 430-amino-acid chain; its full sequence is Gamma-glutamyl phosphate reductase (430 aa).

This sequence belongs to the gamma-glutamyl phosphate reductase family.

The protein localises to the cytoplasm. It carries out the reaction L-glutamate 5-semialdehyde + phosphate + NADP(+) = L-glutamyl 5-phosphate + NADPH + H(+). The protein operates within amino-acid biosynthesis; L-proline biosynthesis; L-glutamate 5-semialdehyde from L-glutamate: step 2/2. Functionally, catalyzes the NADPH-dependent reduction of L-glutamate 5-phosphate into L-glutamate 5-semialdehyde and phosphate. The product spontaneously undergoes cyclization to form 1-pyrroline-5-carboxylate. This is Gamma-glutamyl phosphate reductase from Rhodopseudomonas palustris (strain BisA53).